The chain runs to 460 residues: UDP-N-acetylmuramate--L-alanine ligase (460 aa).

118–124 contacts ATP; sequence GAHGKTT.

Belongs to the MurCDEF family.

It localises to the cytoplasm. The enzyme catalyses UDP-N-acetyl-alpha-D-muramate + L-alanine + ATP = UDP-N-acetyl-alpha-D-muramoyl-L-alanine + ADP + phosphate + H(+). It participates in cell wall biogenesis; peptidoglycan biosynthesis. Functionally, cell wall formation. This Clostridium botulinum (strain Alaska E43 / Type E3) protein is UDP-N-acetylmuramate--L-alanine ligase.